Consider the following 67-residue polypeptide: ATP synthase subunit c (67 aa).

2 helical membrane passes run 6–26 (ILAL…LVAN) and 46–66 (IMGV…TFFV).

Belongs to the ATPase C chain family. F-type ATPases have 2 components, F(1) - the catalytic core - and F(0) - the membrane proton channel. F(1) has five subunits: alpha(3), beta(3), gamma(1), delta(1), epsilon(1). F(0) has three main subunits: a(1), b(2) and c(10-14). The alpha and beta chains form an alternating ring which encloses part of the gamma chain. F(1) is attached to F(0) by a central stalk formed by the gamma and epsilon chains, while a peripheral stalk is formed by the delta and b chains.

It is found in the cell membrane. F(1)F(0) ATP synthase produces ATP from ADP in the presence of a proton or sodium gradient. F-type ATPases consist of two structural domains, F(1) containing the extramembraneous catalytic core and F(0) containing the membrane proton channel, linked together by a central stalk and a peripheral stalk. During catalysis, ATP synthesis in the catalytic domain of F(1) is coupled via a rotary mechanism of the central stalk subunits to proton translocation. Its function is as follows. Key component of the F(0) channel; it plays a direct role in translocation across the membrane. A homomeric c-ring of between 10-14 subunits forms the central stalk rotor element with the F(1) delta and epsilon subunits. This is ATP synthase subunit c from Streptococcus mutans serotype c (strain ATCC 700610 / UA159).